We begin with the raw amino-acid sequence, 229 residues long: DNA repair protein RecO (229 aa).

The protein belongs to the RecO family.

Its function is as follows. Involved in DNA repair and RecF pathway recombination. This chain is DNA repair protein RecO, found in Legionella pneumophila (strain Paris).